The following is a 152-amino-acid chain: Catabolic 3-dehydroquinase (152 aa).

The active-site Proton acceptor is the Y24. Substrate is bound by residues N75, H81, and D88. The active-site Proton donor is H101. Substrate contacts are provided by residues 102 to 103 and R112; that span reads IS.

It belongs to the type-II 3-dehydroquinase family. In terms of assembly, homododecamer. Adopts a ring-like structure, composed of an arrangement of two hexameric rings stacked on top of one another.

It catalyses the reaction 3-dehydroquinate = 3-dehydroshikimate + H2O. It participates in aromatic compound metabolism; 3,4-dihydroxybenzoate biosynthesis; 3,4-dihydroxybenzoate from 3-dehydroquinate: step 1/2. Its function is as follows. Is involved in the catabolism of quinate. Allows the utilization of quinate as carbon source via the beta-ketoadipate pathway. This chain is Catabolic 3-dehydroquinase, found in Phaeosphaeria nodorum (strain SN15 / ATCC MYA-4574 / FGSC 10173) (Glume blotch fungus).